Here is a 58-residue protein sequence, read N- to C-terminus: UPF0391 membrane protein Plav_0056 (58 aa).

Helical transmembrane passes span Trp4–Val24 and Ile30–Val50.

It belongs to the UPF0391 family.

It localises to the cell membrane. This Parvibaculum lavamentivorans (strain DS-1 / DSM 13023 / NCIMB 13966) protein is UPF0391 membrane protein Plav_0056.